Consider the following 251-residue polypeptide: Adenosylcobinamide-GDP ribazoletransferase (251 aa).

6 helical membrane passes run leucine 36–serine 56, valine 60–leucine 80, valine 110–phenylalanine 130, glutamate 181–isoleucine 201, asparagine 202–lysine 222, and aspartate 231–isoleucine 251.

The protein belongs to the CobS family. The cofactor is Mg(2+).

It localises to the cell membrane. The enzyme catalyses alpha-ribazole + adenosylcob(III)inamide-GDP = adenosylcob(III)alamin + GMP + H(+). It carries out the reaction alpha-ribazole 5'-phosphate + adenosylcob(III)inamide-GDP = adenosylcob(III)alamin 5'-phosphate + GMP + H(+). Its pathway is cofactor biosynthesis; adenosylcobalamin biosynthesis; adenosylcobalamin from cob(II)yrinate a,c-diamide: step 7/7. Joins adenosylcobinamide-GDP and alpha-ribazole to generate adenosylcobalamin (Ado-cobalamin). Also synthesizes adenosylcobalamin 5'-phosphate from adenosylcobinamide-GDP and alpha-ribazole 5'-phosphate. The chain is Adenosylcobinamide-GDP ribazoletransferase from Clostridium perfringens (strain SM101 / Type A).